We begin with the raw amino-acid sequence, 64 residues long: Large ribosomal subunit protein bL33 (64 aa).

It belongs to the bacterial ribosomal protein bL33 family.

The protein is Large ribosomal subunit protein bL33 of Synechococcus sp. (strain WH7803).